The following is a 471-amino-acid chain: Trigger factor (471 aa).

A PPIase FKBP-type domain is found at 174-261 (GDVAVVSFEG…VKDLKTRELP (88 aa)). Positions 436-446 (ETLPKTKSLNG) are enriched in polar residues. The tract at residues 436–471 (ETLPKTKSLNGKPSTQGKTSQSKSKKTKTKVEKTTK) is disordered. Residues 447–457 (KPSTQGKTSQS) show a composition bias toward low complexity.

The protein belongs to the FKBP-type PPIase family. Tig subfamily.

It is found in the cytoplasm. The catalysed reaction is [protein]-peptidylproline (omega=180) = [protein]-peptidylproline (omega=0). Involved in protein export. Acts as a chaperone by maintaining the newly synthesized protein in an open conformation. Functions as a peptidyl-prolyl cis-trans isomerase. This is Trigger factor from Prochlorococcus marinus (strain MIT 9211).